A 319-amino-acid polypeptide reads, in one-letter code: sn-1-specific diacylglycerol lipase ABHD11 (319 aa).

Residues methionine 1 to tyrosine 28 constitute a mitochondrion transit peptide. In terms of domain architecture, AB hydrolase-1 spans proline 69–lysine 304. Catalysis depends on charge relay system residues serine 143, glutamate 239, and histidine 298.

Belongs to the AB hydrolase superfamily. Phosphorylated.

The protein resides in the mitochondrion. It localises to the mitochondrion matrix. The catalysed reaction is 1-octadecanoyl-2-(5Z,8Z,11Z,14Z-eicosatetraenoyl)-sn-glycerol + H2O = 2-(5Z,8Z,11Z,14Z-eicosatetraenoyl)-glycerol + octadecanoate + H(+). The enzyme catalyses a 1,2-diacyl-sn-glycerol + H2O = a 2-acylglycerol + a fatty acid + H(+). It catalyses the reaction a 1,3-diacyl-sn-glycerol + H2O = a 1-acyl-sn-glycerol + a fatty acid + H(+). It carries out the reaction 1-octadecanoyl-2-(9Z-octadecenoyl)-sn-glycerol + H2O = 2-(9Z-octadecenoyl)-glycerol + octadecanoate + H(+). The catalysed reaction is 1-octadecanoyl-2-(4Z,7Z,10Z,13Z,16Z,19Z-docosahexaenoyl)-sn-glycerol + H2O = 2-(4Z,7Z,10Z,13Z,16Z,19Z-docosahexaenoyl)-glycerol + octadecanoate + H(+). The enzyme catalyses 1,2-didecanoylglycerol + H2O = decanoylglycerol + decanoate + H(+). Catalyzes the hydrolysis of diacylglycerol in vitro and may function as a key regulator in lipid metabolism, namely by regulating the intracellular levels of diacylglycerol. 1,2-diacyl-sn-glycerols are the preferred substrate over 1,3-diacyl-sn-glycerols. The enzyme hydrolyzes stearate in preference to palmitate from the sn-1 position of 1,2-diacyl-sn-glycerols. This is sn-1-specific diacylglycerol lipase ABHD11 from Xenopus tropicalis (Western clawed frog).